A 129-amino-acid chain; its full sequence is MAFDFPDSYRYADSHEYAWQDAAAVRIGLSAYAVDQLGDIVFVDLPEVGAELNRGSSFGTVESVKAVEEMYAPLSGVVLQRNEALLANPEELQNDPHGEGWLLVIQPGDPSQMDQLMDAATYAAKVAAT.

A Lipoyl-binding domain is found at 24–106 (AVRIGLSAYA…HGEGWLLVIQ (83 aa)). Position 65 is an N6-lipoyllysine (lysine 65).

The protein belongs to the GcvH family. The glycine cleavage system is composed of four proteins: P, T, L and H. The cofactor is (R)-lipoate.

The glycine cleavage system catalyzes the degradation of glycine. The H protein shuttles the methylamine group of glycine from the P protein to the T protein. In Synechococcus sp. (strain WH7803), this protein is Glycine cleavage system H protein.